We begin with the raw amino-acid sequence, 185 residues long: Pap fimbrial major pilin protein (185 aa).

The first 22 residues, 1–22 (MIKSVIAGAVAMAVVSFGVNNA), serve as a signal peptide directing secretion. Cys44 and Cys83 form a disulfide bridge.

Belongs to the fimbrial protein family.

It localises to the secreted. The protein resides in the fimbrium. Polymerizes to form the thick (6.8 nm in diameter) rod of the pilus (also called fimbria). The rod is a right-handed helical cylinder with 3.28 PapA subunits per turn. Pili are polar filaments radiating from the surface of the bacterium to a length of 0.5-1.5 micrometers and numbering 100-300 per cell, and enable bacteria to colonize the epithelium of specific host organs. This is Pap fimbrial major pilin protein (papA) from Escherichia coli.